A 274-amino-acid chain; its full sequence is MQFSKMHGLGNDFVVVDGVTQNVFFTPETIRRLANRHCGIGFDQLLIVEAPYDPELDFHYRIFNADGSEVSQCGNGARCFARFVTLKGLTNKKDISVSTQKGNMVLTVKDDNQIRVNMGEPIWEPAKIPFTANKFEKNYILRTDIQTVLCGAVSMGNPHCVVQVDDIQTANVEQLGPLLESHERFPERVNAGFMQIINKEHIKLRVYERGAGETQACGSGACAAVAVGIMQGLLNNNVQVDLPGGSLMIEWNGVGHPLYMTGEATHIYDGFITL.

Substrate is bound by residues N11, Q44, and N64. C73 functions as the Proton donor in the catalytic mechanism. Substrate contacts are provided by residues 74 to 75, N157, N190, and 208 to 209; these read GN and ER. Residue C217 is the Proton acceptor of the active site. Residue 218–219 coordinates substrate; that stretch reads GS.

It belongs to the diaminopimelate epimerase family. In terms of assembly, homodimer (Potential). Previously DapF has been proposed to be a monomer, however it seems that it adopts a dimeric structure.

Its subcellular location is the cytoplasm. It carries out the reaction (2S,6S)-2,6-diaminopimelate = meso-2,6-diaminopimelate. Its pathway is amino-acid biosynthesis; L-lysine biosynthesis via DAP pathway; DL-2,6-diaminopimelate from LL-2,6-diaminopimelate: step 1/1. Inhibited by LL-aziridino (LL-AziDAP), DL-aziridino (DL-AziDAP). Also inhibited by (2S,3R,6S)-2,6-diamino-3-fluoropimelate (L,L-3-fluoro-DAP) and (2R,3S,6S)-2,6-diamino-3-fluoropimelate (D,L-3-fluoro-DAP). Functionally, catalyzes the stereoinversion of LL-2,6-diaminopimelate (L,L-DAP) to meso-diaminopimelate (meso-DAP), a precursor of L-lysine and an essential component of the bacterial peptidoglycan. Only accepts DAP isomers with the L configuration. This is Diaminopimelate epimerase from Haemophilus influenzae (strain ATCC 51907 / DSM 11121 / KW20 / Rd).